A 466-amino-acid polypeptide reads, in one-letter code: UDP-N-acetylmuramoylalanine--D-glutamate ligase (466 aa).

122–128 (GTNGKTT) is a binding site for ATP.

It belongs to the MurCDEF family.

Its subcellular location is the cytoplasm. The catalysed reaction is UDP-N-acetyl-alpha-D-muramoyl-L-alanine + D-glutamate + ATP = UDP-N-acetyl-alpha-D-muramoyl-L-alanyl-D-glutamate + ADP + phosphate + H(+). The protein operates within cell wall biogenesis; peptidoglycan biosynthesis. Cell wall formation. Catalyzes the addition of glutamate to the nucleotide precursor UDP-N-acetylmuramoyl-L-alanine (UMA). This Aromatoleum aromaticum (strain DSM 19018 / LMG 30748 / EbN1) (Azoarcus sp. (strain EbN1)) protein is UDP-N-acetylmuramoylalanine--D-glutamate ligase.